Here is a 94-residue protein sequence, read N- to C-terminus: Aspartyl/glutamyl-tRNA(Asn/Gln) amidotransferase subunit C (94 aa).

The protein belongs to the GatC family. Heterotrimer of A, B and C subunits.

It catalyses the reaction L-glutamyl-tRNA(Gln) + L-glutamine + ATP + H2O = L-glutaminyl-tRNA(Gln) + L-glutamate + ADP + phosphate + H(+). The enzyme catalyses L-aspartyl-tRNA(Asn) + L-glutamine + ATP + H2O = L-asparaginyl-tRNA(Asn) + L-glutamate + ADP + phosphate + 2 H(+). Its function is as follows. Allows the formation of correctly charged Asn-tRNA(Asn) or Gln-tRNA(Gln) through the transamidation of misacylated Asp-tRNA(Asn) or Glu-tRNA(Gln) in organisms which lack either or both of asparaginyl-tRNA or glutaminyl-tRNA synthetases. The reaction takes place in the presence of glutamine and ATP through an activated phospho-Asp-tRNA(Asn) or phospho-Glu-tRNA(Gln). This chain is Aspartyl/glutamyl-tRNA(Asn/Gln) amidotransferase subunit C, found in Desulfotalea psychrophila (strain LSv54 / DSM 12343).